The following is an 82-amino-acid chain: Large ribosomal subunit protein bL27 (82 aa).

Residues 1–20 (MAHKKGASSSRNGRDSNPQY) form a disordered region. The span at 7–19 (ASSSRNGRDSNPQ) shows a compositional bias: polar residues.

This sequence belongs to the bacterial ribosomal protein bL27 family.

In Bifidobacterium longum (strain NCC 2705), this protein is Large ribosomal subunit protein bL27.